A 200-amino-acid chain; its full sequence is Neutrophil gelatinase-associated lipocalin (200 aa).

An N-terminal signal peptide occupies residues 1–20; sequence MALSVMCLGLALLGVLQSQA. Residue glutamine 21 is modified to Pyrrolidone carboxylic acid. Residue 72–74 participates in a carboxymycobactin binding; it reads YST. N-linked (GlcNAc...) asparagine glycosylation is found at asparagine 81 and asparagine 85. Residues cysteine 98 and cysteine 197 are joined by a disulfide bond. Tyrosine 128 serves as a coordination point for enterobactin. Residues lysine 147, lysine 156, and tyrosine 160 each coordinate a carboxymycobactin. Lysine 156 is an enterobactin binding site.

It belongs to the calycin superfamily. Lipocalin family. Monomer. Homodimer; disulfide-linked. Heterodimer; disulfide-linked with MMP9. In terms of processing, N-glycosylated. In terms of tissue distribution, expressed in the cortical tubules of the kidney (at protein level). Also expressed in the medullary tubules of the kidney. Detected in lung, spleen, uterus, vagina and epididymis.

It localises to the secreted. Its subcellular location is the cytoplasmic granule lumen. It is found in the cytoplasmic vesicle lumen. Functionally, iron-trafficking protein involved in multiple processes such as apoptosis, innate immunity and renal development. Binds iron through association with 2,3-dihydroxybenzoic acid (2,3-DHBA), a siderophore that shares structural similarities with bacterial enterobactin, and delivers or removes iron from the cell, depending on the context. Iron-bound form (holo-24p3) is internalized following binding to the SLC22A17 (24p3R) receptor, leading to release of iron and subsequent increase of intracellular iron concentration. In contrast, association of the iron-free form (apo-24p3) with the SLC22A17 (24p3R) receptor is followed by association with an intracellular siderophore, iron chelation and iron transfer to the extracellular medium, thereby reducing intracellular iron concentration. Involved in apoptosis due to interleukin-3 (IL3) deprivation: iron-loaded form increases intracellular iron concentration without promoting apoptosis, while iron-free form decreases intracellular iron levels, inducing expression of the proapoptotic protein BCL2L11/BIM, resulting in apoptosis. Involved in innate immunity; limits bacterial proliferation by sequestering iron bound to microbial siderophores, such as enterobactin. Can also bind siderophores from M.tuberculosis. This Mus musculus (Mouse) protein is Neutrophil gelatinase-associated lipocalin (Lcn2).